The chain runs to 825 residues: Probable phosphoketolase (825 aa).

The protein belongs to the XFP family. Thiamine diphosphate is required as a cofactor.

The sequence is that of Probable phosphoketolase from Schizosaccharomyces pombe (strain 972 / ATCC 24843) (Fission yeast).